We begin with the raw amino-acid sequence, 95 residues long: Aspartyl/glutamyl-tRNA(Asn/Gln) amidotransferase subunit C (95 aa).

Belongs to the GatC family. As to quaternary structure, heterotrimer of A, B and C subunits.

It catalyses the reaction L-glutamyl-tRNA(Gln) + L-glutamine + ATP + H2O = L-glutaminyl-tRNA(Gln) + L-glutamate + ADP + phosphate + H(+). The catalysed reaction is L-aspartyl-tRNA(Asn) + L-glutamine + ATP + H2O = L-asparaginyl-tRNA(Asn) + L-glutamate + ADP + phosphate + 2 H(+). Allows the formation of correctly charged Asn-tRNA(Asn) or Gln-tRNA(Gln) through the transamidation of misacylated Asp-tRNA(Asn) or Glu-tRNA(Gln) in organisms which lack either or both of asparaginyl-tRNA or glutaminyl-tRNA synthetases. The reaction takes place in the presence of glutamine and ATP through an activated phospho-Asp-tRNA(Asn) or phospho-Glu-tRNA(Gln). The polypeptide is Aspartyl/glutamyl-tRNA(Asn/Gln) amidotransferase subunit C (Ruegeria pomeroyi (strain ATCC 700808 / DSM 15171 / DSS-3) (Silicibacter pomeroyi)).